Here is a 203-residue protein sequence, read N- to C-terminus: Phosphatidylglycerophosphatase B (203 aa).

Position 1 (Met1) is a topological domain, cytoplasmic. Residues 2-17 form a helical membrane-spanning segment; that stretch reads YKPVSLFLFFLILAAA. Residues 18–55 lie on the Extracellular side of the membrane; sequence IHTNAVQSADEAISKAAVLIRQPWLNEVMTGITHLGAS. A helical membrane pass occupies residues 56–74; sequence SFLLPLIVIIGAGMFFYRK. At 75–78 the chain is on the cytoplasmic side; it reads TWDG. The chain crosses the membrane as a helical span at residues 79-99; sequence LLMLLVFGTDRLLNKVLKEWI. The interval 96-104 is phosphatase sequence motif I; that stretch reads KEWIERVRP. Residues 100-119 are Extracellular-facing; sequence ERVRPDFAPLVHESSFSFPS. The phosphatase sequence motif II stretch occupies residues 118 to 121; sequence PSGH. A helical membrane pass occupies residues 120–139; it reads GHSMNAACVYPVIAYFLVKH. The active-site Proton donors is His121. Residues 140-146 are Cytoplasmic-facing; the sequence is LPFLSKH. Residues 147–167 form a helical membrane-spanning segment; the sequence is KKMVYIIAGVIAVLVGISRVY. The interval 164–175 is phosphatase sequence motif III; the sequence is SRVYLGVHFVTD. Residues 168 to 172 are Extracellular-facing; that stretch reads LGVHF. Residue His171 is the Nucleophile of the active site. A helical transmembrane segment spans residues 173–196; it reads VTDVLGGFSLGLLLFFLVKGFDEK. Over 197 to 203 the chain is Cytoplasmic; the sequence is IKRFRQK.

Belongs to the PA-phosphatase related phosphoesterase family.

Its subcellular location is the cell membrane. The catalysed reaction is a 1,2-diacyl-sn-glycero-3-phospho-(1'-sn-glycero-3'-phosphate) + H2O = a 1,2-diacyl-sn-glycero-3-phospho-(1'-sn-glycerol) + phosphate. Its function is as follows. Catalyzes the dephosphorylation of phosphatidylglycerophosphate (PGP) to phosphatidylglycerol. Also has undecaprenyl pyrophosphate phosphatase activity, required for the biosynthesis of the lipid carrier undecaprenyl phosphate. In Bacillus subtilis (strain 168), this protein is Phosphatidylglycerophosphatase B.